A 170-amino-acid chain; its full sequence is MNSRGLILTLGVVIAVAFAQQDSEVEREMMKRKSAYMRFGRSDGGNPMEMEKRKSAYMRFGKRSSGGDEQELVGGDDIDMEKRKSAYMRFGKRSGPQEDDMPMEKRKSAYMRFGKRSSDMEVIGNEGVDGDAHDLFKRKSAYMRFGKRSMGEEEDHDMMKRKSAYMRFGR.

An N-terminal signal peptide occupies residues 1–19; that stretch reads MNSRGLILTLGVVIAVAFA. Pyrrolidone carboxylic acid is present on Gln20. Position 39 is a phenylalanine amide (Phe39). The propeptide occupies 42 to 51; that stretch reads SDGGNPMEME. Residue Phe60 is modified to Phenylalanine amide. Positions 63-81 are excised as a propeptide; it reads RSSGGDEQELVGGDDIDME. Phe90 is modified (phenylalanine amide). Positions 93-104 are excised as a propeptide; the sequence is RSGPQEDDMPME. A Phenylalanine amide modification is found at Phe113. A propeptide spanning residues 116–136 is cleaved from the precursor; sequence RSSDMEVIGNEGVDGDAHDLF. At Phe145 the chain carries Phenylalanine amide. A propeptide spanning residues 148-159 is cleaved from the precursor; it reads RSMGEEEDHDMM. A disordered region spans residues 150–170; it reads MGEEEDHDMMKRKSAYMRFGR. The span at 159-170 shows a compositional bias: basic residues; sequence MKRKSAYMRFGR. Residue Phe168 is modified to Phenylalanine amide.

This sequence belongs to the FARP (FMRFamide related peptide) family. In terms of tissue distribution, each flp gene is expressed in a distinct set of neurons. Flp-6 is expressed in the ASE sensory neurons, AFD, ASG, PVT and I1 neurons.

It is found in the secreted. Its function is as follows. FMRFamides and FMRFamide-like peptides are neuropeptides. KSAYMRF-amide has an excitatory effect on dissected pharyngeal myogenic muscle system. This chain is FMRFamide-like neuropeptides 6, found in Caenorhabditis elegans.